Consider the following 304-residue polypeptide: Putative S-adenosyl-L-methionine-dependent methyltransferase MSMEG_1481/MSMEI_1445 (304 aa).

S-adenosyl-L-methionine is bound by residues aspartate 127 and 156 to 157 (DL).

Belongs to the UPF0677 family.

Functionally, exhibits S-adenosyl-L-methionine-dependent methyltransferase activity. The polypeptide is Putative S-adenosyl-L-methionine-dependent methyltransferase MSMEG_1481/MSMEI_1445 (Mycolicibacterium smegmatis (strain ATCC 700084 / mc(2)155) (Mycobacterium smegmatis)).